The sequence spans 353 residues: Heterogeneous nuclear ribonucleoproteins A2/B1 (353 aa).

M1 is subject to N-acetylmethionine. At T4 the chain carries Phosphothreonine. Residues 9–15 carry the Nuclear localization signal motif; the sequence is PLERKKR. 2 consecutive RRM domains span residues 21–104 and 112–191; these read RKLF…ESGK and KKLF…LSRQ. K22 participates in a covalent cross-link: Glycyl lysine isopeptide (Lys-Gly) (interchain with G-Cter in SUMO2). S29 carries the phosphoserine modification. The residue at position 38 (R38) is an Omega-N-methylarginine. Phosphoserine is present on S85. K104 carries the post-translational modification N6,N6-dimethyllysine; alternate. K104 is covalently cross-linked (Glycyl lysine isopeptide (Lys-Gly) (interchain with G-Cter in SUMO2); alternate). Glycyl lysine isopeptide (Lys-Gly) (interchain with G-Cter in SUMO2) cross-links involve residues K112, K120, and K137. Phosphothreonine is present on T140. A Phosphoserine modification is found at S149. K152 participates in a covalent cross-link: Glycyl lysine isopeptide (Lys-Gly) (interchain with G-Cter in SUMO2). Residue T159 is modified to Phosphothreonine. Glycyl lysine isopeptide (Lys-Gly) (interchain with G-Cter in SUMO2); alternate cross-links involve residues K168 and K173. N6-acetyllysine; alternate is present on residues K168 and K173. T176 carries the phosphothreonine modification. K186 participates in a covalent cross-link: Glycyl lysine isopeptide (Lys-Gly) (interchain with G-Cter in SUMO2). Phosphoserine is present on residues S189 and S201. A disordered region spans residues 193 to 353; the sequence is MQEVQSSRSG…SGGYGGRSRY (161 aa). Residues 202–223 show a composition bias toward gly residues; that stretch reads GRGGNFGFGDSRGGGGNFGPGP. Asymmetric dimethylarginine; alternate is present on R203. R203 carries the dimethylated arginine; alternate modification. Omega-N-methylarginine; alternate is present on R203. The residue at position 212 (S212) is a Phosphoserine. Asymmetric dimethylarginine; alternate is present on R213. The residue at position 213 (R213) is a Dimethylated arginine; alternate. R213 is modified (omega-N-methylarginine; alternate). S225 is subject to Phosphoserine. R228 is subject to Omega-N-methylarginine. Residues S231 and S236 each carry the phosphoserine modification. An Omega-N-methylarginine modification is found at R238. Phosphoserine is present on S259. An Asymmetric dimethylarginine; alternate modification is found at R266. R266 is subject to Omega-N-methylarginine; alternate. The interval 308–347 is nuclear targeting sequence; sequence QQPSNYGPMKSGNFGGSRNMGGPYGGGNYGPGGSGGSGGY. The span at 320–353 shows a compositional bias: gly residues; sequence NFGGSRNMGGPYGGGNYGPGGSGGSGGYGGRSRY. S324 carries the phosphoserine modification. Position 325 is an omega-N-methylarginine (R325). Position 331 is a phosphotyrosine (Y331). Residues S341 and S344 each carry the phosphoserine modification. Residue Y347 is modified to Phosphotyrosine. An Omega-N-methylarginine modification is found at R350.

Identified in the spliceosome C complex. Identified in a IGF2BP1-dependent mRNP granule complex containing untranslated mRNAs. Interacts with IGF2BP1. Interacts with C9orf72. Interacts with DGCR8. Interacts with TARDBP. Interacts with CKAP5. Interacts with PPIA/CYPA. Interacts (via C-terminus) with FAM76B; the interaction results in retention of HNRNPA2B1 in the nucleus and inhibition of the NF-kappa-B-mediated inflammatory pathway. Interacts with NF-kappa-B inhibitors NFKBIA and NFKBIE; the interaction may be mediated by the RRM2 domain of HNRNPA2B1, and HNRNPA2B1 may interact simultaneously with FAM76B and either NFKBIA or NFKBIE to form a complex. Post-translationally, sumoylated in exosomes, promoting miRNAs-binding. In terms of processing, asymmetric dimethylation at Arg-266 constitutes the major methylation site. According to a report, methylation affects subcellular location and promotes nuclear localization. According to another report, methylation at Arg-266 does not influence nucleocytoplasmic shuttling.

It localises to the nucleus. Its subcellular location is the nucleoplasm. The protein resides in the cytoplasmic granule. It is found in the secreted. The protein localises to the extracellular exosome. Functionally, heterogeneous nuclear ribonucleoprotein (hnRNP) that associates with nascent pre-mRNAs, packaging them into hnRNP particles. The hnRNP particle arrangement on nascent hnRNA is non-random and sequence-dependent and serves to condense and stabilize the transcripts and minimize tangling and knotting. Packaging plays a role in various processes such as transcription, pre-mRNA processing, RNA nuclear export, subcellular location, mRNA translation and stability of mature mRNAs. Forms hnRNP particles with at least 20 other different hnRNP and heterogeneous nuclear RNA in the nucleus. Involved in transport of specific mRNAs to the cytoplasm in oligodendrocytes and neurons: acts by specifically recognizing and binding the A2RE (21 nucleotide hnRNP A2 response element) or the A2RE11 (derivative 11 nucleotide oligonucleotide) sequence motifs present on some mRNAs, and promotes their transport to the cytoplasm. Specifically binds single-stranded telomeric DNA sequences, protecting telomeric DNA repeat against endonuclease digestion. Also binds other RNA molecules, such as primary miRNA (pri-miRNAs): acts as a nuclear 'reader' of the N6-methyladenosine (m6A) mark by specifically recognizing and binding a subset of nuclear m6A-containing pri-miRNAs. Binding to m6A-containing pri-miRNAs promotes pri-miRNA processing by enhancing binding of DGCR8 to pri-miRNA transcripts. Involved in miRNA sorting into exosomes following sumoylation, possibly by binding (m6A)-containing pre-miRNAs. Acts as a regulator of efficiency of mRNA splicing, possibly by binding to m6A-containing pre-mRNAs. Plays a role in the splicing of pyruvate kinase PKM by binding repressively to sequences flanking PKM exon 9, inhibiting exon 9 inclusion and resulting in exon 10 inclusion and production of the PKM M2 isoform. This is Heterogeneous nuclear ribonucleoproteins A2/B1 (HNRNPA2B1) from Pongo abelii (Sumatran orangutan).